We begin with the raw amino-acid sequence, 360 residues long: GDP-mannose transporter (360 aa).

Over 1–49 (MSSSETKGRNEEDVAEIKKAIATGAVKDPSNLSAIPPIFVVSGANFSMN) the chain is Cytoplasmic. Residues 50–67 (FLLLCIQSSVCCACVFAV) traverse the membrane as a helical segment. The Lumenal segment spans residues 68-84 (KKLGIISFRDFDMKDAK). The chain crosses the membrane as a helical span at residues 85 to 105 (MWFPISFLLVSVIYTGSKSLQ). The Cytoplasmic portion of the chain corresponds to 106-110 (YLSIP). Residues 111–131 (VYTIFKNLTIILIAYGEVLWF) traverse the membrane as a helical segment. Topologically, residues 132–134 (GGR) are lumenal. The helical transmembrane segment at 135–155 (VTALTFVSFIFMVISSIIAAW) threads the bilayer. The Cytoplasmic portion of the chain corresponds to 156 to 164 (SDVQSALAS). Residues 165 to 185 (SIPGASSGVSVGAMQSLFGAL) traverse the membrane as a helical segment. A topological domain (lumenal) is located at residue Arg-186. The chain crosses the membrane as a helical span at residues 187–207 (GLNVGYFWMLVNCLTSAAYVL). Topologically, residues 208–220 (SMRKRIKSTGFSD) are cytoplasmic. Residues 221 to 241 (WDTMFYNNLLSIPVLAVFSLI) form a helical membrane-spanning segment. The Lumenal segment spans residues 242–260 (AEDWGRENLNRNFPAETRN). Residues 261-281 (FLLFAIAFSGAAAVGISYTTA) form a helical membrane-spanning segment. At 282 to 291 (WCVRVTSSTT) the chain is on the cytoplasmic side. Residues 292–312 (YSMVGALNKLPVAASGMLFFG) traverse the membrane as a helical segment. At 313–314 (DP) the chain is on the lumenal side. The helical transmembrane segment at 315–335 (VTVGSVSAVGVGFFAGIVYAV) threads the bilayer. Topologically, residues 336 to 360 (AKNNQKKNERRQAADAIIPMASRKP) are cytoplasmic.

It belongs to the TPT transporter family. SLC35D subfamily. Homooligomer.

It localises to the golgi apparatus membrane. The protein resides in the cytoplasmic vesicle membrane. The protein localises to the endoplasmic reticulum membrane. Involved in the import of GDP-mannose from the cytoplasm into the Golgi lumen. The protein is GDP-mannose transporter (VRG4) of Coprinopsis cinerea (strain Okayama-7 / 130 / ATCC MYA-4618 / FGSC 9003) (Inky cap fungus).